The chain runs to 299 residues: Taste receptor type 2 member 1 (299 aa).

Residues Met1–His9 are Extracellular-facing. A helical membrane pass occupies residues Phe10–Val30. Residues Asn31–Arg55 are Cytoplasmic-facing. A helical membrane pass occupies residues Ile56–Ile76. At Met77–Asn81 the chain is on the extracellular side. A helical membrane pass occupies residues Cys82–Phe102. The Cytoplasmic segment spans residues Tyr103 to Lys124. A helical transmembrane segment spans residues Leu125–Ser145. Over Lys146 to Ser178 the chain is Extracellular. Asn163 is a glycosylation site (N-linked (GlcNAc...) asparagine). A helical membrane pass occupies residues Phe179–Phe199. The Cytoplasmic portion of the chain corresponds to Ser200 to Ala222. A helical transmembrane segment spans residues Pro223–Ile243. Topologically, residues Lys244–Phe257 are extracellular. Residues Ile258 to Ile278 traverse the membrane as a helical segment. Residues Leu279–Gln299 are Cytoplasmic-facing.

Belongs to the G-protein coupled receptor T2R family.

It localises to the membrane. In terms of biological role, receptor that may play a role in the perception of bitterness and is gustducin-linked. May play a role in sensing the chemical composition of the gastrointestinal content. The activity of this receptor may stimulate alpha gustducin, mediate PLC-beta-2 activation and lead to the gating of TRPM5. In Pongo pygmaeus (Bornean orangutan), this protein is Taste receptor type 2 member 1 (TAS2R1).